Reading from the N-terminus, the 405-residue chain is ATP-sensitive inward rectifier potassium channel 15 (405 aa).

Residues 1-90 (MVARWVKGSE…LQDLWTTVID (90 aa)) are Cytoplasmic-facing. The chain crosses the membrane as a helical span at residues 91 to 117 (MKWRYKLTLFAATFVMTWFLFGVVYYA). Over 118–143 (IAFIHGDLELGESNSNHTPCIMKVDS) the chain is Extracellular. The helical; Pore-forming intramembrane region spans 144–160 (LTGAFLFSLESQTTIGY). Positions 157–162 (TIGYGV) match the Selectivity filter motif. Over 161 to 169 (GVRSITEEC) the chain is Extracellular. A helical membrane pass occupies residues 170 to 195 (PHAIFLLVAQLVITTLIEIFITGTFL). The Cytoplasmic segment spans residues 196–405 (AKIARPKKRA…RSLLLQQSNV (210 aa)).

This sequence belongs to the inward rectifier-type potassium channel (TC 1.A.2.1) family. KCNJ15 subfamily. Can form heteromultimeric channels with Kir5.1/KCNJ16. Interacts with PATJ.

Its subcellular location is the membrane. It localises to the cell membrane. It carries out the reaction K(+)(in) = K(+)(out). Channel activity is regulated by variations of cytosolic pH; reversibly inhibited by acidic pH values. Inhibited by Ba(2+) and Cs(+) in a voltage-dependent manner. Inward rectifier potassium channels are characterized by a greater tendency to allow potassium to flow into the cell rather than out of it. Their voltage dependence is regulated by the concentration of extracellular potassium; as external potassium is raised, the voltage range of the channel opening shifts to more positive voltages. The inward rectification is mainly due to the blockage of outward current by internal magnesium. The polypeptide is ATP-sensitive inward rectifier potassium channel 15 (Kcnj15) (Rattus norvegicus (Rat)).